Consider the following 411-residue polypeptide: Flavohemoprotein (411 aa).

The region spanning 5-142 is the Globin domain; sequence TLSQETKQIV…IADVFIQVEK (138 aa). His-89 is a heme b binding site. Catalysis depends on charge relay system residues Tyr-99 and Glu-141. The tract at residues 153-411 is reductase; it reads GGWREFRSFV…FGPAGTLASS (259 aa). The region spanning 156 to 267 is the FAD-binding FR-type domain; the sequence is REFRSFVVEK…TAPAGDFTLQ (112 aa). FAD-binding positions include Tyr-194 and 210–213; that span reads RQYS. 280–285 provides a ligand contact to NADP(+); it reads GVGITP. FAD is bound at residue 401–404; it reads FFGP.

It belongs to the globin family. Two-domain flavohemoproteins subfamily. In the C-terminal section; belongs to the flavoprotein pyridine nucleotide cytochrome reductase family. It depends on heme b as a cofactor. The cofactor is FAD.

The catalysed reaction is 2 nitric oxide + NADPH + 2 O2 = 2 nitrate + NADP(+) + H(+). It catalyses the reaction 2 nitric oxide + NADH + 2 O2 = 2 nitrate + NAD(+) + H(+). In terms of biological role, is involved in NO detoxification in an aerobic process, termed nitric oxide dioxygenase (NOD) reaction that utilizes O(2) and NAD(P)H to convert NO to nitrate, which protects the bacterium from various noxious nitrogen compounds. Therefore, plays a central role in the inducible response to nitrosative stress. In Halalkalibacterium halodurans (strain ATCC BAA-125 / DSM 18197 / FERM 7344 / JCM 9153 / C-125) (Bacillus halodurans), this protein is Flavohemoprotein.